We begin with the raw amino-acid sequence, 423 residues long: Sorting nexin-4 (423 aa).

The span at 1 to 21 (MTDKGKNDLTSKAKDKARGNP) shows a compositional bias: basic and acidic residues. The disordered stretch occupies residues 1-25 (MTDKGKNDLTSKAKDKARGNPEKPP). The PX domain maps to 29 to 157 (EIIVSDPQKR…TFLVSKDWES (129 aa)). Residues arginine 78, serine 80, lysine 104, and arginine 123 each coordinate a 1,2-diacyl-sn-glycero-3-phospho-(1D-myo-inositol-3-phosphate). Coiled coils occupy residues 217-252 (KKNDSMSEDYTKLGSNLQELQELVTGENEELAAKLK) and 346-381 (SRREKINKLEGKITSLTGELENAKKVADGFEQECLK).

This sequence belongs to the sorting nexin family. Forms a complex with ATG20 and ATG17. Binds also to SNC1 and SNX41.

Its subcellular location is the cytoplasm. It is found in the cytosol. The protein resides in the preautophagosomal structure membrane. The protein localises to the endosome membrane. Functionally, sorting nexin, involved in the separation or division of vacuoles throughout the entire life cycle of the cells. Involved in retrieval of late-Golgi SNAREs from post-Golgi endosomes to the trans-Golgi network, for cytoplasm to vacuole transport (Cvt), and autophagy of large cargos including mitophagy, pexophagy and glycophagy. Involved in proper sorting of the v-SNARE protein SNC1. This chain is Sorting nexin-4, found in Saccharomyces cerevisiae (strain ATCC 204508 / S288c) (Baker's yeast).